The sequence spans 215 residues: Pyridoxine/pyridoxamine 5'-phosphate oxidase (215 aa).

Substrate-binding positions include 9-12 and K69; that span reads RRDY. FMN-binding positions include 64 to 69, 79 to 80, K86, and Q108; these read RVLLLK and FT. Y126, R130, and S134 together coordinate substrate. FMN contacts are provided by residues 143-144 and W188; that span reads QS. 194-196 is a binding site for substrate; the sequence is RLH. R198 serves as a coordination point for FMN.

It belongs to the pyridoxamine 5'-phosphate oxidase family. As to quaternary structure, homodimer. It depends on FMN as a cofactor.

It catalyses the reaction pyridoxamine 5'-phosphate + O2 + H2O = pyridoxal 5'-phosphate + H2O2 + NH4(+). The enzyme catalyses pyridoxine 5'-phosphate + O2 = pyridoxal 5'-phosphate + H2O2. Its pathway is cofactor metabolism; pyridoxal 5'-phosphate salvage; pyridoxal 5'-phosphate from pyridoxamine 5'-phosphate: step 1/1. It participates in cofactor metabolism; pyridoxal 5'-phosphate salvage; pyridoxal 5'-phosphate from pyridoxine 5'-phosphate: step 1/1. Catalyzes the oxidation of either pyridoxine 5'-phosphate (PNP) or pyridoxamine 5'-phosphate (PMP) into pyridoxal 5'-phosphate (PLP). This is Pyridoxine/pyridoxamine 5'-phosphate oxidase from Pseudomonas syringae pv. syringae (strain B728a).